A 120-amino-acid chain; its full sequence is Large ribosomal subunit protein bL12 (120 aa).

It belongs to the bacterial ribosomal protein bL12 family. Homodimer. Part of the ribosomal stalk of the 50S ribosomal subunit. Forms a multimeric L10(L12)X complex, where L10 forms an elongated spine to which 2 to 4 L12 dimers bind in a sequential fashion. Binds GTP-bound translation factors.

Its function is as follows. Forms part of the ribosomal stalk which helps the ribosome interact with GTP-bound translation factors. Is thus essential for accurate translation. This Shouchella clausii (strain KSM-K16) (Alkalihalobacillus clausii) protein is Large ribosomal subunit protein bL12.